A 188-amino-acid chain; its full sequence is MALAMLVLVVSPWSAARGVLRNYWERLLRKLPQSRPGFPSPPWGPALAVQGPAMFTEPANDTSGSKENSSLLDSIFWMAAPKNRRTIEVNRCRRRNPQKLIKVKNNIDVCPECGHLKQKHVLCAYCYEKVCKETAEIRRQIGKQEGGPFKAPTIETVVLYTGETPSEQDQGKRIIERDRKRPSWFTQN.

Positions 110, 113, 123, and 126 each coordinate Zn(2+). Residues 164-188 (TPSEQDQGKRIIERDRKRPSWFTQN) form a disordered region. Basic and acidic residues predominate over residues 169–181 (DQGKRIIERDRKR).

Belongs to the bacterial ribosomal protein bL32 family. In terms of assembly, component of the mitochondrial large ribosomal subunit (mt-LSU). Mature mammalian 55S mitochondrial ribosomes consist of a small (28S) and a large (39S) subunit. The 28S small subunit contains a 12S ribosomal RNA (12S mt-rRNA) and 30 different proteins. The 39S large subunit contains a 16S rRNA (16S mt-rRNA), a copy of mitochondrial valine transfer RNA (mt-tRNA(Val)), which plays an integral structural role, and 52 different proteins. bL32m has a zinc binding site. In terms of processing, MRPL32 precursor is processed by the m-AAA protease (composed of AFG3L2 and SPG7), which cleaves the N-terminal transit peptide. Cleavage by the m-AAA protease takes place prior to assembly into the large subunit, an essential step for mitochondrial ribosome (mitoribosome) assembly. Proper processing by the m-AAA protease is dependent on the zinc-binding region within the tightly folded C-terminal domain of MRPL32: zinc-dependent folding halts degradation initiated from the N-terminus and triggers the release of mature MRPL32.

Its subcellular location is the mitochondrion. Its function is as follows. Component of the mitochondrial large ribosomal subunit (mt-LSU). The mitochondrial ribosome (mitoribosome) is a large ribonucleoprotein complex responsible for the synthesis of proteins inside mitochondria. The sequence is that of Large ribosomal subunit protein bL32m (MRPL32) from Homo sapiens (Human).